The primary structure comprises 156 residues: Myosin, essential light chain, adductor muscle (156 aa).

EF-hand domains lie at 6–43 and 81–116; these read DEID…LGIN and GTFA…LGER.

Its function is as follows. In molluscan muscle, calcium regulation is associated with myosin rather than with actin. Muscle myosin contains two types of light chains: the catalytic light chain, essential for ATPase activity, and the regulatory light chain, a calcium-binding protein responsible for Ca(2+) dependent binding and Ca(2+) dependent Mg-ATPase activity. The sequence is that of Myosin, essential light chain, adductor muscle from Mizuhopecten yessoensis (Japanese scallop).